We begin with the raw amino-acid sequence, 202 residues long: NADH-quinone oxidoreductase subunit C (202 aa).

This sequence belongs to the complex I 30 kDa subunit family. In terms of assembly, NDH-1 is composed of 14 different subunits. Subunits NuoB, C, D, E, F, and G constitute the peripheral sector of the complex.

The protein localises to the cell inner membrane. It catalyses the reaction a quinone + NADH + 5 H(+)(in) = a quinol + NAD(+) + 4 H(+)(out). Functionally, NDH-1 shuttles electrons from NADH, via FMN and iron-sulfur (Fe-S) centers, to quinones in the respiratory chain. The immediate electron acceptor for the enzyme in this species is believed to be ubiquinone. Couples the redox reaction to proton translocation (for every two electrons transferred, four hydrogen ions are translocated across the cytoplasmic membrane), and thus conserves the redox energy in a proton gradient. In Albidiferax ferrireducens (strain ATCC BAA-621 / DSM 15236 / T118) (Rhodoferax ferrireducens), this protein is NADH-quinone oxidoreductase subunit C.